The chain runs to 335 residues: Acetyl-coenzyme A carboxylase carboxyl transferase subunit alpha (335 aa).

The CoA carboxyltransferase C-terminal domain maps to 40-294 (QLETLAARRR…KEAIEKHLNA (255 aa)).

Belongs to the AccA family. Acetyl-CoA carboxylase is a heterohexamer composed of biotin carboxyl carrier protein (AccB), biotin carboxylase (AccC) and two subunits each of ACCase subunit alpha (AccA) and ACCase subunit beta (AccD).

It is found in the cytoplasm. The enzyme catalyses N(6)-carboxybiotinyl-L-lysyl-[protein] + acetyl-CoA = N(6)-biotinyl-L-lysyl-[protein] + malonyl-CoA. It participates in lipid metabolism; malonyl-CoA biosynthesis; malonyl-CoA from acetyl-CoA: step 1/1. Its function is as follows. Component of the acetyl coenzyme A carboxylase (ACC) complex. First, biotin carboxylase catalyzes the carboxylation of biotin on its carrier protein (BCCP) and then the CO(2) group is transferred by the carboxyltransferase to acetyl-CoA to form malonyl-CoA. This Prochlorococcus marinus (strain MIT 9301) protein is Acetyl-coenzyme A carboxylase carboxyl transferase subunit alpha.